We begin with the raw amino-acid sequence, 372 residues long: NAD(P)H-quinone oxidoreductase subunit 1 (372 aa).

8 consecutive transmembrane segments (helical) span residues 27-47, 97-117, 128-148, 176-196, 204-224, 266-286, 308-328, and 347-367; these read IIWL…GVLV, ILFT…WLIV, VGIG…GLLM, LALS…IDIV, ILSW…ICAL, ILSA…PIPV, SIGI…AILL, and FLLP…LAFP.

It belongs to the complex I subunit 1 family. As to quaternary structure, NDH-1 is composed of at least 11 different subunits.

Its subcellular location is the cellular thylakoid membrane. The enzyme catalyses a plastoquinone + NADH + (n+1) H(+)(in) = a plastoquinol + NAD(+) + n H(+)(out). It catalyses the reaction a plastoquinone + NADPH + (n+1) H(+)(in) = a plastoquinol + NADP(+) + n H(+)(out). In terms of biological role, NDH-1 shuttles electrons from an unknown electron donor, via FMN and iron-sulfur (Fe-S) centers, to quinones in the respiratory and/or the photosynthetic chain. The immediate electron acceptor for the enzyme in this species is believed to be plastoquinone. Couples the redox reaction to proton translocation, and thus conserves the redox energy in a proton gradient. This Prochlorococcus marinus (strain MIT 9312) protein is NAD(P)H-quinone oxidoreductase subunit 1.